Reading from the N-terminus, the 444-residue chain is UDP-N-acetylmuramate--L-alanine ligase (444 aa).

ATP is bound at residue 110–116 (GAHGKTS).

The protein belongs to the MurCDEF family.

The protein resides in the cytoplasm. The enzyme catalyses UDP-N-acetyl-alpha-D-muramate + L-alanine + ATP = UDP-N-acetyl-alpha-D-muramoyl-L-alanine + ADP + phosphate + H(+). The protein operates within cell wall biogenesis; peptidoglycan biosynthesis. Its function is as follows. Cell wall formation. The chain is UDP-N-acetylmuramate--L-alanine ligase from Streptococcus pneumoniae (strain JJA).